Here is a 318-residue protein sequence, read N- to C-terminus: Trans-prenyltransferase (318 aa).

The helical transmembrane segment at 1–21 (MLHLIYISIIVVLIIILISYT) threads the bilayer. 3 residues coordinate isopentenyl diphosphate: Lys85, Arg88, and His122. Positions 129 and 135 each coordinate Mg(2+). Dimethylallyl diphosphate is bound at residue Arg140. Isopentenyl diphosphate is bound at residue Arg141. Dimethylallyl diphosphate contacts are provided by Lys216, Thr217, and Gln254.

It belongs to the FPP/GGPP synthase family. Asfivirus trans-prenyltransferase subfamily. Mg(2+) serves as cofactor.

It localises to the host endoplasmic reticulum. The protein resides in the host membrane. It catalyses the reaction isopentenyl diphosphate + dimethylallyl diphosphate = (2E)-geranyl diphosphate + diphosphate. It carries out the reaction isopentenyl diphosphate + (2E)-geranyl diphosphate = (2E,6E)-farnesyl diphosphate + diphosphate. The catalysed reaction is isopentenyl diphosphate + (2E,6E)-farnesyl diphosphate = (2E,6E,10E)-geranylgeranyl diphosphate + diphosphate. The enzyme catalyses isopentenyl diphosphate + (2E,6E,10E)-geranylgeranyl diphosphate = (2E,6E,10E,14E)-geranylfarnesyl diphosphate + diphosphate. It functions in the pathway isoprenoid biosynthesis; farnesyl diphosphate biosynthesis; farnesyl diphosphate from geranyl diphosphate and isopentenyl diphosphate: step 1/1. It participates in isoprenoid biosynthesis; geranyl diphosphate biosynthesis; geranyl diphosphate from dimethylallyl diphosphate and isopentenyl diphosphate: step 1/1. Its pathway is isoprenoid biosynthesis; geranylgeranyl diphosphate biosynthesis; geranylgeranyl diphosphate from farnesyl diphosphate and isopentenyl diphosphate: step 1/1. Functionally, trans-prenyltransferase that catalyzes the sequential condensation of isopentenyl diphosphate (IPP) with different allylic diphosphates, such as dimethylallyl diphosphate (DMAPP), geranyl diphosphate (GPP), farnesyl diphosphate (FPP) and geranylgeranyl diphosphate (GGPP), farnesyl diphosphate being the best allylic substrate. The protein is Trans-prenyltransferase of African swine fever virus (isolate Tick/South Africa/Pretoriuskop Pr4/1996) (ASFV).